Here is a 136-residue protein sequence, read N- to C-terminus: Glutamate-rich protein 4 (136 aa).

The interval 92–136 is disordered; it reads EEEEEEEQEEKSCVEENKGPEEKQDEERSRSSYPAQRLPDFGMTI. The segment covering 101-121 has biased composition (basic and acidic residues); the sequence is EKSCVEENKGPEEKQDEERSR.

In Mus musculus (Mouse), this protein is Glutamate-rich protein 4 (Erich4).